The following is a 210-amino-acid chain: Ribosomal RNA small subunit methyltransferase G (210 aa).

Residues glycine 76, leucine 81, 127–128 (VE), and arginine 142 each bind S-adenosyl-L-methionine.

It belongs to the methyltransferase superfamily. RNA methyltransferase RsmG family.

The protein resides in the cytoplasm. It carries out the reaction guanosine(527) in 16S rRNA + S-adenosyl-L-methionine = N(7)-methylguanosine(527) in 16S rRNA + S-adenosyl-L-homocysteine. In terms of biological role, specifically methylates the N7 position of guanine in position 527 of 16S rRNA. This Aliivibrio fischeri (strain ATCC 700601 / ES114) (Vibrio fischeri) protein is Ribosomal RNA small subunit methyltransferase G.